The following is a 565-amino-acid chain: Probable peptidoglycan D,D-transpeptidase PbpC (565 aa).

Residues 10–30 (FILVVTLFVLASLAVSGRLVY) form a helical membrane-spanning segment. Residue S289 is the Acyl-ester intermediate of the active site.

This sequence belongs to the transpeptidase family. FtsI subfamily.

The protein localises to the cell inner membrane. The enzyme catalyses Preferential cleavage: (Ac)2-L-Lys-D-Ala-|-D-Ala. Also transpeptidation of peptidyl-alanyl moieties that are N-acyl substituents of D-alanine.. It participates in cell wall biogenesis; peptidoglycan biosynthesis. Its function is as follows. Catalyzes cross-linking of the peptidoglycan cell wall at the division septum. Binds penicillin. This Pseudomonas aeruginosa (strain ATCC 15692 / DSM 22644 / CIP 104116 / JCM 14847 / LMG 12228 / 1C / PRS 101 / PAO1) protein is Probable peptidoglycan D,D-transpeptidase PbpC.